Here is a 259-residue protein sequence, read N- to C-terminus: Thiazole synthase (259 aa).

Catalysis depends on lysine 98, which acts as the Schiff-base intermediate with DXP. Residues glycine 159, alanine 185–glycine 186, and asparagine 207–serine 208 each bind 1-deoxy-D-xylulose 5-phosphate.

Belongs to the ThiG family. Homotetramer. Forms heterodimers with either ThiH or ThiS.

The protein localises to the cytoplasm. It carries out the reaction [ThiS sulfur-carrier protein]-C-terminal-Gly-aminoethanethioate + 2-iminoacetate + 1-deoxy-D-xylulose 5-phosphate = [ThiS sulfur-carrier protein]-C-terminal Gly-Gly + 2-[(2R,5Z)-2-carboxy-4-methylthiazol-5(2H)-ylidene]ethyl phosphate + 2 H2O + H(+). The protein operates within cofactor biosynthesis; thiamine diphosphate biosynthesis. In terms of biological role, catalyzes the rearrangement of 1-deoxy-D-xylulose 5-phosphate (DXP) to produce the thiazole phosphate moiety of thiamine. Sulfur is provided by the thiocarboxylate moiety of the carrier protein ThiS. In vitro, sulfur can be provided by H(2)S. The protein is Thiazole synthase of Chlorobium phaeovibrioides (strain DSM 265 / 1930) (Prosthecochloris vibrioformis (strain DSM 265)).